Reading from the N-terminus, the 290-residue chain is 4-hydroxybenzoate octaprenyltransferase (290 aa).

9 helical membrane-spanning segments follow: residues 20–40 (IGILLLLWPTLWGLWLAAEGV), 43–63 (LDILLIFVLGTVLMRSAGCVV), 92–112 (EALLLAAGLSLVAFLLIQPLN), 114–131 (LTIELSFVALFLAASYPF), 135–155 (FFAMPQAYLGIAFSFGIPMAF), 160–180 (GEVPFPAWFLMGANLLWVIAY), 209–229 (VVGVVLCHMAFLAGMVAIGLL), 231–251 (NLGVIYYIGLATALGLILYQY), and 266–286 (FLHNNWVGATIFAGIVLDYLV).

It belongs to the UbiA prenyltransferase family. The cofactor is Mg(2+).

It localises to the cell inner membrane. It catalyses the reaction all-trans-octaprenyl diphosphate + 4-hydroxybenzoate = 4-hydroxy-3-(all-trans-octaprenyl)benzoate + diphosphate. It participates in cofactor biosynthesis; ubiquinone biosynthesis. Catalyzes the prenylation of para-hydroxybenzoate (PHB) with an all-trans polyprenyl group. Mediates the second step in the final reaction sequence of ubiquinone-8 (UQ-8) biosynthesis, which is the condensation of the polyisoprenoid side chain with PHB, generating the first membrane-bound Q intermediate 3-octaprenyl-4-hydroxybenzoate. The polypeptide is 4-hydroxybenzoate octaprenyltransferase (Nitrosospira multiformis (strain ATCC 25196 / NCIMB 11849 / C 71)).